Reading from the N-terminus, the 321-residue chain is Methionine import ATP-binding protein MetN (321 aa).

The ABC transporter domain maps to isoleucine 2–phenylalanine 241. An ATP-binding site is contributed by glycine 38–serine 45.

The protein belongs to the ABC transporter superfamily. Methionine importer (TC 3.A.1.24) family. In terms of assembly, the complex is composed of two ATP-binding proteins (MetN), two transmembrane proteins (MetI) and a solute-binding protein (MetQ).

Its subcellular location is the cell membrane. It catalyses the reaction L-methionine(out) + ATP + H2O = L-methionine(in) + ADP + phosphate + H(+). It carries out the reaction D-methionine(out) + ATP + H2O = D-methionine(in) + ADP + phosphate + H(+). Part of the ABC transporter complex MetNIQ involved in methionine import. Responsible for energy coupling to the transport system. The sequence is that of Methionine import ATP-binding protein MetN from Thermobifida fusca (strain YX).